The sequence spans 206 residues: Large ribosomal subunit protein uL4 (206 aa).

The disordered stretch occupies residues 43-78 (ARSGNRAQKDREQVKHTTKKPWRQKGTGRARAGMSS). Residues 58-70 (HTTKKPWRQKGTG) are compositionally biased toward basic residues.

This sequence belongs to the universal ribosomal protein uL4 family. As to quaternary structure, part of the 50S ribosomal subunit.

Functionally, one of the primary rRNA binding proteins, this protein initially binds near the 5'-end of the 23S rRNA. It is important during the early stages of 50S assembly. It makes multiple contacts with different domains of the 23S rRNA in the assembled 50S subunit and ribosome. Its function is as follows. Forms part of the polypeptide exit tunnel. This is Large ribosomal subunit protein uL4 from Polynucleobacter necessarius subsp. necessarius (strain STIR1).